A 289-amino-acid polypeptide reads, in one-letter code: Metal-staphylopine import system permease protein CntC (289 aa).

5 consecutive transmembrane segments (helical) span residues 13 to 33, 77 to 97, 115 to 135, 194 to 214, and 249 to 269; these read AVIA…APLV, LLYV…LGFL, VMLA…FGMG, IAII…GFSF, and IAIV…QIAI. The 190-residue stretch at 73–262 folds into the ABC transmembrane type-1 domain; the sequence is IRPSLLYVFV…IIVMAFNFLS (190 aa).

The protein belongs to the binding-protein-dependent transport system permease family. In terms of assembly, the complex is composed of two ATP-binding proteins (CntD and CntF), two transmembrane proteins (CntB and CntC) and a solute-binding protein (CntA).

It is found in the cell membrane. With respect to regulation, nickel/cobalt import is reduced in the presence of zinc. Its function is as follows. Part of the ABC transporter complex CntABCDF (Opp1) involved in the uptake of metal in complex with the metallophore staphylopine (StP). Involved in the import of divalent metals ions such as nickel, cobalt and zinc. Probably responsible for the translocation of the substrate across the membrane. Plays a major role in nickel/cobalt import in zinc-depleted conditions. Contributes to virulence. Required for full urease activity in vitro. The protein is Metal-staphylopine import system permease protein CntC of Staphylococcus aureus (strain NCTC 8325 / PS 47).